Consider the following 287-residue polypeptide: 4-hydroxybenzoate octaprenyltransferase (287 aa).

The next 6 membrane-spanning stretches (helical) occupy residues 41–61 (WPLI…GCAM), 89–109 (WEAV…ILPL), 133–153 (FFAI…PMAF), 158–178 (NTVP…SIAY), 218–238 (LGIY…WVGW), and 267–287 (NNWL…MAGS).

This sequence belongs to the UbiA prenyltransferase family. The cofactor is Mg(2+).

The protein localises to the cell inner membrane. It catalyses the reaction all-trans-octaprenyl diphosphate + 4-hydroxybenzoate = 4-hydroxy-3-(all-trans-octaprenyl)benzoate + diphosphate. It participates in cofactor biosynthesis; ubiquinone biosynthesis. Its function is as follows. Catalyzes the prenylation of para-hydroxybenzoate (PHB) with an all-trans polyprenyl group. Mediates the second step in the final reaction sequence of ubiquinone-8 (UQ-8) biosynthesis, which is the condensation of the polyisoprenoid side chain with PHB, generating the first membrane-bound Q intermediate 3-octaprenyl-4-hydroxybenzoate. This Burkholderia multivorans (strain ATCC 17616 / 249) protein is 4-hydroxybenzoate octaprenyltransferase.